Reading from the N-terminus, the 175-residue chain is Protein LpfE (175 aa).

Positions 1 to 20 are cleaved as a signal peptide; sequence MKNLHALMPACLLLTASAMA.

The protein belongs to the fimbrial protein family.

It localises to the fimbrium. This is Protein LpfE (lpfE) from Salmonella typhimurium (strain LT2 / SGSC1412 / ATCC 700720).